The chain runs to 365 residues: Chorismate synthase (365 aa).

Positions 48 and 54 each coordinate NADP(+). FMN-binding positions include 131 to 133 (RSS), 243 to 244 (NA), Gly-288, 303 to 307 (KPTSS), and Arg-329.

The protein belongs to the chorismate synthase family. As to quaternary structure, homotetramer. FMNH2 serves as cofactor.

It catalyses the reaction 5-O-(1-carboxyvinyl)-3-phosphoshikimate = chorismate + phosphate. It functions in the pathway metabolic intermediate biosynthesis; chorismate biosynthesis; chorismate from D-erythrose 4-phosphate and phosphoenolpyruvate: step 7/7. Catalyzes the anti-1,4-elimination of the C-3 phosphate and the C-6 proR hydrogen from 5-enolpyruvylshikimate-3-phosphate (EPSP) to yield chorismate, which is the branch point compound that serves as the starting substrate for the three terminal pathways of aromatic amino acid biosynthesis. This reaction introduces a second double bond into the aromatic ring system. In Sinorhizobium medicae (strain WSM419) (Ensifer medicae), this protein is Chorismate synthase.